The sequence spans 228 residues: Large ribosomal subunit protein uL3 (228 aa).

Gln151 is modified (N5-methylglutamine).

The protein belongs to the universal ribosomal protein uL3 family. As to quaternary structure, part of the 50S ribosomal subunit. Forms a cluster with proteins L14 and L19. Post-translationally, methylated by PrmB.

Functionally, one of the primary rRNA binding proteins, it binds directly near the 3'-end of the 23S rRNA, where it nucleates assembly of the 50S subunit. The chain is Large ribosomal subunit protein uL3 from Rhizobium meliloti (strain 1021) (Ensifer meliloti).